Consider the following 319-residue polypeptide: NADH-ubiquinone oxidoreductase chain 1 (319 aa).

The next 8 membrane-spanning stretches (helical) occupy residues 5 to 25 (TINSLMYIIPILIAVAFLTLM), 72 to 92 (LLISSPILALTTAMLIWTPIP), 102 to 122 (LGLLSILAISSMAVNSILWAG), 146 to 166 (VTLGIILLSILILTGGFTMQL), 173 to 193 (FTWLLTTSWPLAMMWFISTLA), 225 to 245 (FFLTEYANIIVMNLLTCILFI), 254 to 274 (ELFLINLITKTMILSLSFLWI), and 295 to 315 (LPLTMSLCLLHTSLPISTSGI).

The protein belongs to the complex I subunit 1 family.

The protein localises to the mitochondrion inner membrane. It catalyses the reaction a ubiquinone + NADH + 5 H(+)(in) = a ubiquinol + NAD(+) + 4 H(+)(out). In terms of biological role, core subunit of the mitochondrial membrane respiratory chain NADH dehydrogenase (Complex I) that is believed to belong to the minimal assembly required for catalysis. Complex I functions in the transfer of electrons from NADH to the respiratory chain. The immediate electron acceptor for the enzyme is believed to be ubiquinone. The sequence is that of NADH-ubiquinone oxidoreductase chain 1 (MT-ND1) from Varanus flavescens (Yellow monitor).